The following is a 203-amino-acid chain: LexA repressor (203 aa).

Positions 30 to 50 (VREICQAVSLKSTSTVHGHLK) form a DNA-binding region, H-T-H motif. Catalysis depends on for autocatalytic cleavage activity residues serine 127 and lysine 164.

It belongs to the peptidase S24 family. In terms of assembly, homodimer.

The enzyme catalyses Hydrolysis of Ala-|-Gly bond in repressor LexA.. In terms of biological role, represses a number of genes involved in the response to DNA damage (SOS response), including recA and lexA. In the presence of single-stranded DNA, RecA interacts with LexA causing an autocatalytic cleavage which disrupts the DNA-binding part of LexA, leading to derepression of the SOS regulon and eventually DNA repair. The protein is LexA repressor of Clostridium perfringens (strain ATCC 13124 / DSM 756 / JCM 1290 / NCIMB 6125 / NCTC 8237 / Type A).